The sequence spans 1169 residues: ATP-dependent helicase/deoxyribonuclease subunit B (1169 aa).

In terms of domain architecture, UvrD-like helicase ATP-binding spans 1-285; sequence MEIQFLAGRS…TIFERNHRHL (285 aa). 8-15 is an ATP binding site; the sequence is GRSGSGKT. Positions 280–586 constitute a UvrD-like helicase C-terminal domain; the sequence is RNHRHLYTPD…KFALIPPSLD (307 aa). 4 residues coordinate [4Fe-4S] cluster: Cys801, Cys1121, Cys1124, and Cys1130.

Belongs to the helicase family. AddB/RexB type 1 subfamily. In terms of assembly, heterodimer of AddA and AddB. The cofactor is Mg(2+). [4Fe-4S] cluster serves as cofactor.

Its function is as follows. The heterodimer acts as both an ATP-dependent DNA helicase and an ATP-dependent, dual-direction single-stranded exonuclease. Recognizes the chi site generating a DNA molecule suitable for the initiation of homologous recombination. The AddB subunit has 5' -&gt; 3' nuclease activity but not helicase activity. The chain is ATP-dependent helicase/deoxyribonuclease subunit B from Bacillus pumilus (strain SAFR-032).